The primary structure comprises 225 residues: Guanylate kinase (225 aa).

One can recognise a Guanylate kinase-like domain in the interval 20–198 (GNLFMVVAPS…ALSELQCLVA (179 aa)). 27 to 34 (APSGAGKS) contributes to the ATP binding site.

It belongs to the guanylate kinase family.

Its subcellular location is the cytoplasm. The catalysed reaction is GMP + ATP = GDP + ADP. In terms of biological role, essential for recycling GMP and indirectly, cGMP. This Paraburkholderia xenovorans (strain LB400) protein is Guanylate kinase.